The sequence spans 95 residues: Large ribosomal subunit protein eL37z (95 aa).

Residues Cys19, Cys22, Cys34, and Cys37 each contribute to the Zn(2+) site. The segment at 19–37 adopts a C4-type zinc-finger fold; that stretch reads CVRCGRRSFHIQKSRCSAC.

The protein belongs to the eukaryotic ribosomal protein eL37 family. Requires Zn(2+) as cofactor.

Binds to the 23S rRNA. The sequence is that of Large ribosomal subunit protein eL37z (RPL37A) from Arabidopsis thaliana (Mouse-ear cress).